A 160-amino-acid chain; its full sequence is Arginine repressor (160 aa).

The protein belongs to the ArgR family.

The protein resides in the cytoplasm. The protein operates within amino-acid biosynthesis; L-arginine biosynthesis [regulation]. In terms of biological role, regulates arginine biosynthesis genes. This is Arginine repressor from Anaeromyxobacter sp. (strain K).